Reading from the N-terminus, the 448-residue chain is Methylenetetrahydrofolate--tRNA-(uracil-5-)-methyltransferase TrmFO (448 aa).

Residue 13-18 participates in FAD binding; that stretch reads GAGLAG.

The protein belongs to the MnmG family. TrmFO subfamily. FAD is required as a cofactor.

It is found in the cytoplasm. It carries out the reaction uridine(54) in tRNA + (6R)-5,10-methylene-5,6,7,8-tetrahydrofolate + NADH + H(+) = 5-methyluridine(54) in tRNA + (6S)-5,6,7,8-tetrahydrofolate + NAD(+). It catalyses the reaction uridine(54) in tRNA + (6R)-5,10-methylene-5,6,7,8-tetrahydrofolate + NADPH + H(+) = 5-methyluridine(54) in tRNA + (6S)-5,6,7,8-tetrahydrofolate + NADP(+). Catalyzes the folate-dependent formation of 5-methyl-uridine at position 54 (M-5-U54) in all tRNAs. This Streptococcus pyogenes serotype M28 (strain MGAS6180) protein is Methylenetetrahydrofolate--tRNA-(uracil-5-)-methyltransferase TrmFO.